The chain runs to 160 residues: Small ribosomal subunit protein bS6 (160 aa).

The segment at 100-160 (PSSVLARKSD…DDARETAGAE (61 aa)) is disordered. Basic and acidic residues-rich tracts occupy residues 106–116 (RKSDDRGDRGN) and 136–160 (RSSE…AGAE).

Belongs to the bacterial ribosomal protein bS6 family.

Binds together with bS18 to 16S ribosomal RNA. The chain is Small ribosomal subunit protein bS6 from Gluconobacter oxydans (strain 621H) (Gluconobacter suboxydans).